The following is a 273-amino-acid chain: MQHPTPDALHARLAARRFILAGPCALEDFDVAMETAHAVREAAEAAGLFAVFKSSWDKANRTSITSFRGPGLVRGMEWLARIREESGLPVVTDIHLPEQAAPVAEVADIIQIPAFLCRQTDLLVAAAATGRVVNVKKGQFVAPWDMRPAVEKLRAAGNERILLTERGASFGYNNLVVDYRSIPTMQGFGVPVVFDATHSVQLPGGLGGSSGGERRHVPVLARAAVAAGVDGVFLECHPDPDKALCDGPNSWPLDRLPALLKELSALWSLEHVC.

This sequence belongs to the KdsA family.

The protein resides in the cytoplasm. It carries out the reaction D-arabinose 5-phosphate + phosphoenolpyruvate + H2O = 3-deoxy-alpha-D-manno-2-octulosonate-8-phosphate + phosphate. The protein operates within carbohydrate biosynthesis; 3-deoxy-D-manno-octulosonate biosynthesis; 3-deoxy-D-manno-octulosonate from D-ribulose 5-phosphate: step 2/3. It functions in the pathway bacterial outer membrane biogenesis; lipopolysaccharide biosynthesis. In Nitratidesulfovibrio vulgaris (strain ATCC 29579 / DSM 644 / CCUG 34227 / NCIMB 8303 / VKM B-1760 / Hildenborough) (Desulfovibrio vulgaris), this protein is 2-dehydro-3-deoxyphosphooctonate aldolase.